The primary structure comprises 126 residues: MRILFLIAFMYGCVHSYVNAVETKCPNLAIVTSSGEFHCSGCVERMPGFSYMYWLANDMKSDEDTKFIEHLGGGIKEDETVRTTDGGITTLRKVLHVTDTNKFAHYRFTCVLITLDGVSKKNIWLK.

The first 16 residues, 1–16 (MRILFLIAFMYGCVHS), serve as a signal peptide directing secretion.

The protein belongs to the orthopoxvirus OPG022 family.

The protein resides in the secreted. Functionally, soluble IL18-binding protein that may modulate the host antiviral response. This chain is Interleukin-18-binding protein (OPG022), found in Cynomys gunnisoni (Gunnison's prairie dog).